A 296-amino-acid chain; its full sequence is Phosphatidylglycerol--prolipoprotein diacylglyceryl transferase (296 aa).

4 helical membrane-spanning segments follow: residues 10-30 (IAFS…LAAF), 57-77 (LLFY…MLFY), 92-112 (VWEG…ACGL), and 119-139 (LHFF…LGFG). A 1,2-diacyl-sn-glycero-3-phospho-(1'-sn-glycerol) is bound at residue Arg140. Helical transmembrane passes span 194-214 (QLYE…TFSM), 220-240 (YAVS…VEFV), and 255-275 (LTMG…LLAL).

The protein belongs to the Lgt family.

Its subcellular location is the cell inner membrane. The catalysed reaction is L-cysteinyl-[prolipoprotein] + a 1,2-diacyl-sn-glycero-3-phospho-(1'-sn-glycerol) = an S-1,2-diacyl-sn-glyceryl-L-cysteinyl-[prolipoprotein] + sn-glycerol 1-phosphate + H(+). The protein operates within protein modification; lipoprotein biosynthesis (diacylglyceryl transfer). In terms of biological role, catalyzes the transfer of the diacylglyceryl group from phosphatidylglycerol to the sulfhydryl group of the N-terminal cysteine of a prolipoprotein, the first step in the formation of mature lipoproteins. This Xanthomonas campestris pv. campestris (strain 8004) protein is Phosphatidylglycerol--prolipoprotein diacylglyceryl transferase.